A 59-amino-acid chain; its full sequence is Large ribosomal subunit protein uL30 (59 aa).

It belongs to the universal ribosomal protein uL30 family. Part of the 50S ribosomal subunit.

The polypeptide is Large ribosomal subunit protein uL30 (Clostridium botulinum (strain 657 / Type Ba4)).